Reading from the N-terminus, the 167-residue chain is Crossover junction endodeoxyribonuclease RuvC (167 aa).

Catalysis depends on residues Asp-14, Glu-75, and Asp-147. The Mg(2+) site is built by Asp-14, Glu-75, and Asp-147.

It belongs to the RuvC family. Homodimer which binds Holliday junction (HJ) DNA. The HJ becomes 2-fold symmetrical on binding to RuvC with unstacked arms; it has a different conformation from HJ DNA in complex with RuvA. In the full resolvosome a probable DNA-RuvA(4)-RuvB(12)-RuvC(2) complex forms which resolves the HJ. Requires Mg(2+) as cofactor.

Its subcellular location is the cytoplasm. The catalysed reaction is Endonucleolytic cleavage at a junction such as a reciprocal single-stranded crossover between two homologous DNA duplexes (Holliday junction).. The RuvA-RuvB-RuvC complex processes Holliday junction (HJ) DNA during genetic recombination and DNA repair. Endonuclease that resolves HJ intermediates. Cleaves cruciform DNA by making single-stranded nicks across the HJ at symmetrical positions within the homologous arms, yielding a 5'-phosphate and a 3'-hydroxyl group; requires a central core of homology in the junction. The consensus cleavage sequence is 5'-(A/T)TT(C/G)-3'. Cleavage occurs on the 3'-side of the TT dinucleotide at the point of strand exchange. HJ branch migration catalyzed by RuvA-RuvB allows RuvC to scan DNA until it finds its consensus sequence, where it cleaves and resolves the cruciform DNA. This is Crossover junction endodeoxyribonuclease RuvC from Synechocystis sp. (strain ATCC 27184 / PCC 6803 / Kazusa).